We begin with the raw amino-acid sequence, 391 residues long: Histidinol-phosphate aminotransferase (391 aa).

K245 is modified (N6-(pyridoxal phosphate)lysine).

The protein belongs to the class-II pyridoxal-phosphate-dependent aminotransferase family. Histidinol-phosphate aminotransferase subfamily. As to quaternary structure, homodimer. The cofactor is pyridoxal 5'-phosphate.

It catalyses the reaction L-histidinol phosphate + 2-oxoglutarate = 3-(imidazol-4-yl)-2-oxopropyl phosphate + L-glutamate. It functions in the pathway amino-acid biosynthesis; L-histidine biosynthesis; L-histidine from 5-phospho-alpha-D-ribose 1-diphosphate: step 7/9. This chain is Histidinol-phosphate aminotransferase, found in Bifidobacterium adolescentis (strain ATCC 15703 / DSM 20083 / NCTC 11814 / E194a).